The primary structure comprises 228 residues: Ribonuclease S-1 (228 aa).

Positions 1–27 are cleaved as a signal peptide; sequence MGVTGMTYMFTMVFSLIVLILSSSTVG. Gln36 contributes to the RNA binding site. Residues Cys42 and Cys49 are joined by a disulfide bond. Residue His60 participates in RNA binding. His60 functions as the Proton donor in the catalytic mechanism. Cys75 and Cys119 form a disulfide bridge. N-linked (GlcNAc...) asparagine glycosylation is present at Asn87. RNA is bound at residue 98–99; the sequence is NV. Asn101 is a glycosylation site (N-linked (GlcNAc...) asparagine). Residues Phe108, 111–112, and 115–116 each bind RNA; these read KE and KH. The active site involves Glu112. His116 functions as the Proton acceptor in the catalytic mechanism. N-linked (GlcNAc...) asparagine glycosylation is found at Asn144, Asn157, and Asn175. Intrachain disulfides connect Cys183/Cys222 and Cys199/Cys210.

It belongs to the RNase T2 family. In terms of processing, N-linked core structure at Asn-87 and Asn-101 contains xylose and fucose or consists of disaccharide (GlcNAc-GlcNAc). N-linked core structure at Asn-144 contains xylose.

The catalysed reaction is a ribonucleotidyl-ribonucleotide-RNA + H2O = a 3'-end 3'-phospho-ribonucleotide-RNA + a 5'-end dephospho-ribonucleoside-RNA + H(+). In terms of biological role, self-incompatibility (SI) is the inherited ability of a flowering plant to prevent self-fertilization by discriminating between self and non-self pollen during pollination. In many species, self-incompatibility is controlled by the single, multiallelic locus S. This is Ribonuclease S-1 from Pyrus pyrifolia (Chinese pear).